A 135-amino-acid chain; its full sequence is Mini-ribonuclease 3 (135 aa).

The active site involves aspartate 19.

This sequence belongs to the MrnC RNase family. Homodimer. The cofactor is Mg(2+).

Its subcellular location is the cytoplasm. In terms of biological role, involved in correct processing of both the 5' and 3' ends of 23S rRNA precursor. Processes 30S rRNA precursor transcript even in absence of ribonuclease 3 (Rnc); Rnc processes 30S rRNA into smaller rRNA precursors. The protein is Mini-ribonuclease 3 of Gloeobacter violaceus (strain ATCC 29082 / PCC 7421).